The primary structure comprises 31 residues: Cycloviolacin-O25 (31 aa).

Residues 1-31 constitute a cross-link (cyclopeptide (Asp-Asn)); sequence DIFCGETCAFIPCITHVPGTCSCKSKVCYFN. Cystine bridges form between C4-C21, C8-C23, and C13-C28.

This is a cyclic peptide. As to expression, expressed in roots and runners but not in leaves, petals and petioles (at protein level).

Functionally, probably participates in a plant defense mechanism. This is Cycloviolacin-O25 from Viola odorata (Sweet violet).